The sequence spans 487 residues: Serine/threonine-protein kinase 4 (487 aa).

Methionine 1 carries the post-translational modification N-acetylmethionine. Threonine 3 is subject to Phosphothreonine. A Protein kinase domain is found at 30–281 (FDVLEKLGEG…ATQLLQHPFV (252 aa)). Residues 36-44 (LGEGSYGSV) and lysine 59 contribute to the ATP site. The active-site Proton acceptor is the aspartate 149. Threonine 183 is subject to Phosphothreonine; by autocatalysis. Serine 265 is subject to Phosphoserine. Residues 289–311 (ILRDLINEAMDVKLKRQEAQQRE) adopt a coiled-coil conformation. Residues 305–334 (QEAQQREVDQDDEENSEEDEMDSGTMVRAA) are disordered. Residues 313-326 (DQDDEENSEEDEMD) show a composition bias toward acidic residues. Serine 320 is subject to Phosphoserine. Phosphothreonine occurs at positions 340 and 367. Threonine 387 carries the phosphothreonine; by PKB/AKT1 modification. A Phosphoserine modification is found at serine 410. Tyrosine 433 is modified (phosphotyrosine). The SARAH domain occupies 433–480 (YEFLKSWTVEDLQKRLLALDPMMEQEMEEIRQKYRSKRQPILDAIEAK).

The protein belongs to the protein kinase superfamily. STE Ser/Thr protein kinase family. STE20 subfamily. As to quaternary structure, homodimer; mediated via the coiled-coil region. Interacts with NORE1, which inhibits autoactivation. Interacts with and stabilizes SAV1. Interacts with RASSF1. Interacts with FOXO3. Interacts with RASSF2 (via SARAH domain). Interacts with AR, PKB/AKT1, TNNI3 and SIRT1. Interacts with MARK3 and SCRIB in the presence of DLG5. Interacts with DLG5 (via PDZ domain 3). Requires Mg(2+) as cofactor. Autophosphorylated on serine and threonine residues. Phosphorylation at Thr-387 by PKB/AKT1, leads to inhibition of its: kinase activity, nuclear translocation and autophosphorylation at Thr-183. It also diminishes its cleavage by caspases and its ability to phosphorylate FOXO3. In terms of processing, proteolytically cleaved by caspase-3 during apoptosis at Asp-326 resulting in a 37 kDa form. Proteolytic cleavage results in kinase activation and nuclear translocation of the truncated form (MST1/N).

It localises to the cytoplasm. The protein resides in the nucleus. It carries out the reaction L-seryl-[protein] + ATP = O-phospho-L-seryl-[protein] + ADP + H(+). The enzyme catalyses L-threonyl-[protein] + ATP = O-phospho-L-threonyl-[protein] + ADP + H(+). Inhibited by the C-terminal non-catalytic region. Activated by caspase-cleavage. Full activation also requires homodimerization and autophosphorylation of Thr-183. Activated by RASSF1 which acts by preventing its dephosphorylation. Stress-activated, pro-apoptotic kinase which, following caspase-cleavage, enters the nucleus and induces chromatin condensation followed by internucleosomal DNA fragmentation. Key component of the Hippo signaling pathway which plays a pivotal role in organ size control and tumor suppression by restricting proliferation and promoting apoptosis. The core of this pathway is composed of a kinase cascade wherein STK3/MST2 and STK4/MST1, in complex with its regulatory protein SAV1, phosphorylates and activates LATS1/2 in complex with its regulatory protein MOB1, which in turn phosphorylates and inactivates YAP1 oncoprotein and WWTR1/TAZ. Phosphorylation of YAP1 by LATS2 inhibits its translocation into the nucleus to regulate cellular genes important for cell proliferation, cell death, and cell migration. STK3/MST2 and STK4/MST1 are required to repress proliferation of mature hepatocytes, to prevent activation of facultative adult liver stem cells (oval cells), and to inhibit tumor formation. Phosphorylates 'Ser-14' of histone H2B (H2BS14ph) during apoptosis. Phosphorylates FOXO3 upon oxidative stress, which results in its nuclear translocation and cell death initiation. Phosphorylates MOBKL1A, MOBKL1B and RASSF2. Phosphorylates TNNI3 (cardiac Tn-I) and alters its binding affinity to TNNC1 (cardiac Tn-C) and TNNT2 (cardiac Tn-T). Phosphorylates FOXO1 on 'Ser-212' and regulates its activation and stimulates transcription of PMAIP1 in a FOXO1-dependent manner. Phosphorylates SIRT1 and inhibits SIRT1-mediated p53/TP53 deacetylation, thereby promoting p53/TP53 dependent transcription and apoptosis upon DNA damage. Acts as an inhibitor of PKB/AKT1. Phosphorylates AR on 'Ser-650' and suppresses its activity by intersecting with PKB/AKT1 signaling and antagonizing formation of AR-chromatin complexes. This chain is Serine/threonine-protein kinase 4 (Stk4), found in Mus musculus (Mouse).